A 235-amino-acid polypeptide reads, in one-letter code: MQKPKYKRIMLKISGEALAGEKKLGLDTDTINEISRNIKEVYDLGVEIAIVVGGGNFWRGRSGKGMDRTTADYMGMLATVINALGLQDALESQGMPTRVQTAIEMRQIAEPYIRRKAVRHLEKKRIVIFACGTGNPFFSTDTTAALRAAEIDAEVILLAKKVDGVYDSDPNINPNAKKFDKLSFMDVINKGLGVMDSTAASLCKDNNIPIIVFGLNEPGNIVKAVMGEKIGTIVM.

12-15 (KISG) is a binding site for ATP. G54 contributes to the UMP binding site. ATP is bound by residues G55 and R59. UMP is bound by residues D72 and 133–140 (TGNPFFST). Positions 166 and 169 each coordinate ATP.

This sequence belongs to the UMP kinase family. In terms of assembly, homohexamer.

It is found in the cytoplasm. It catalyses the reaction UMP + ATP = UDP + ADP. It participates in pyrimidine metabolism; CTP biosynthesis via de novo pathway; UDP from UMP (UMPK route): step 1/1. With respect to regulation, inhibited by UTP. Catalyzes the reversible phosphorylation of UMP to UDP. This Acetivibrio thermocellus (strain ATCC 27405 / DSM 1237 / JCM 9322 / NBRC 103400 / NCIMB 10682 / NRRL B-4536 / VPI 7372) (Clostridium thermocellum) protein is Uridylate kinase.